A 213-amino-acid polypeptide reads, in one-letter code: Uridine kinase (213 aa).

An ATP-binding site is contributed by 14 to 21 (GASASGKS).

It belongs to the uridine kinase family.

The protein localises to the cytoplasm. The enzyme catalyses uridine + ATP = UMP + ADP + H(+). It carries out the reaction cytidine + ATP = CMP + ADP + H(+). The protein operates within pyrimidine metabolism; CTP biosynthesis via salvage pathway; CTP from cytidine: step 1/3. It participates in pyrimidine metabolism; UMP biosynthesis via salvage pathway; UMP from uridine: step 1/1. The sequence is that of Uridine kinase from Vibrio campbellii (strain ATCC BAA-1116).